The following is a 507-amino-acid chain: Maturase K (507 aa).

The protein belongs to the intron maturase 2 family. MatK subfamily.

Its subcellular location is the plastid. It is found in the chloroplast. In terms of biological role, usually encoded in the trnK tRNA gene intron. Probably assists in splicing its own and other chloroplast group II introns. This is Maturase K from Kalmia buxifolia (Sand myrtle).